The chain runs to 356 residues: Naringenin,2-oxoglutarate 3-dioxygenase (356 aa).

The Fe2OG dioxygenase domain occupies 188–292 (CVDMDQKVVV…RLSIATFQNP (105 aa)). 3 residues coordinate Fe cation: H215, D217, and H273. Residue R283 coordinates 2-oxoglutarate.

Belongs to the iron/ascorbate-dependent oxidoreductase family. The cofactor is Fe(2+). It depends on L-ascorbate as a cofactor.

It catalyses the reaction a (2S)-flavan-4-one + 2-oxoglutarate + O2 = a (2R,3R)-dihydroflavonol + succinate + CO2. Its pathway is secondary metabolite biosynthesis; flavonoid biosynthesis. Catalyzes the 3-beta-hydroxylation of 2S-flavanones to 2R,3R-dihydroflavonols which are intermediates in the biosynthesis of flavonols, anthocyanidins, catechins and proanthocyanidins in plants. The chain is Naringenin,2-oxoglutarate 3-dioxygenase (FHT) from Callistephus chinensis (China aster).